A 545-amino-acid chain; its full sequence is CTP synthase (545 aa).

The interval 1–266 is amidoligase domain; the sequence is MKTKFIFITG…DQKIAIMLKL (266 aa). Ser14 serves as a coordination point for CTP. Residue Ser14 coordinates UTP. ATP is bound by residues 15-20 and Asp72; that span reads SLGKGL. Residues Asp72 and Glu140 each coordinate Mg(2+). Residues 147–149, 187–192, and Lys223 contribute to the CTP site; these read DIE and KTKPTQ. UTP-binding positions include 187–192 and Lys223; that span reads KTKPTQ. The Glutamine amidotransferase type-1 domain occupies 291 to 545; the sequence is TIGIVGKYVD…IKASCENKNK (255 aa). Residue Gly353 participates in L-glutamine binding. Cys380 (nucleophile; for glutamine hydrolysis) is an active-site residue. L-glutamine-binding positions include 381–384, Glu404, and Arg472; that span reads LGMQ. Residues His518 and Glu520 contribute to the active site.

It belongs to the CTP synthase family. In terms of assembly, homotetramer.

The catalysed reaction is UTP + L-glutamine + ATP + H2O = CTP + L-glutamate + ADP + phosphate + 2 H(+). The enzyme catalyses L-glutamine + H2O = L-glutamate + NH4(+). It catalyses the reaction UTP + NH4(+) + ATP = CTP + ADP + phosphate + 2 H(+). Its pathway is pyrimidine metabolism; CTP biosynthesis via de novo pathway; CTP from UDP: step 2/2. Its activity is regulated as follows. Allosterically activated by GTP, when glutamine is the substrate; GTP has no effect on the reaction when ammonia is the substrate. The allosteric effector GTP functions by stabilizing the protein conformation that binds the tetrahedral intermediate(s) formed during glutamine hydrolysis. Inhibited by the product CTP, via allosteric rather than competitive inhibition. In terms of biological role, catalyzes the ATP-dependent amination of UTP to CTP with either L-glutamine or ammonia as the source of nitrogen. Regulates intracellular CTP levels through interactions with the four ribonucleotide triphosphates. In Maridesulfovibrio salexigens (strain ATCC 14822 / DSM 2638 / NCIMB 8403 / VKM B-1763) (Desulfovibrio salexigens), this protein is CTP synthase.